The chain runs to 204 residues: Large ribosomal subunit protein eL15 (204 aa).

Belongs to the eukaryotic ribosomal protein eL15 family. In terms of assembly, component of the large ribosomal subunit.

It localises to the cytoplasm. Its function is as follows. Component of the large ribosomal subunit. The ribosome is a large ribonucleoprotein complex responsible for the synthesis of proteins in the cell. In Silurus meridionalis (Southern catfish), this protein is Large ribosomal subunit protein eL15 (rpl15).